A 113-amino-acid polypeptide reads, in one-letter code: Holo-[acyl-carrier-protein] synthase (113 aa).

Positions 8 and 57 each coordinate Mg(2+).

The protein belongs to the P-Pant transferase superfamily. AcpS family. It depends on Mg(2+) as a cofactor.

It localises to the cytoplasm. The enzyme catalyses apo-[ACP] + CoA = holo-[ACP] + adenosine 3',5'-bisphosphate + H(+). Functionally, transfers the 4'-phosphopantetheine moiety from coenzyme A to a Ser of acyl-carrier-protein. The protein is Holo-[acyl-carrier-protein] synthase of Thermodesulfovibrio yellowstonii (strain ATCC 51303 / DSM 11347 / YP87).